The sequence spans 441 residues: Methionine gamma-lyase (441 aa).

Residues M1–D25 are disordered. K248 is subject to N6-(pyridoxal phosphate)lysine.

It belongs to the trans-sulfuration enzymes family. Homotetramer. It depends on pyridoxal 5'-phosphate as a cofactor. In terms of tissue distribution, expressed in roots, stems, siliques, leaves, flowers and seeds after imbibition (at protein level). Transcripts accumulate in dry mature seeds, but at protein level, only present upon imbibition.

The protein localises to the cytoplasm. The catalysed reaction is L-methionine + H2O = methanethiol + 2-oxobutanoate + NH4(+). Its function is as follows. Catalyzes the degradation of L-methionine to alpha-ketobutyrate, methanethiol and ammonia. Exhibits a high activity toward L-methionine, L-ethionine, L-homocysteine and seleno-L-methionine, but not L-cysteine. Involved in an alternative cysteine biosynthesis pathway to the reverse trans-sulfuration pathway (methionine-&gt;homocysteine-&gt;cystathionine-&gt;cysteine) in which methanethiol is an intermediate. Also mediates an alternative isoleucine biosynthesis pathway in which 2-ketobutyrate is an intermediate. The chain is Methionine gamma-lyase (MGL) from Arabidopsis thaliana (Mouse-ear cress).